The following is a 120-amino-acid chain: Small ribosomal subunit protein uS13 (120 aa).

The interval 94–120 is disordered; that stretch reads GLPLRGQRTRTNARTRKGPRKAIAGKK.

This sequence belongs to the universal ribosomal protein uS13 family. Part of the 30S ribosomal subunit. Forms a loose heterodimer with protein S19. Forms two bridges to the 50S subunit in the 70S ribosome.

Located at the top of the head of the 30S subunit, it contacts several helices of the 16S rRNA. In the 70S ribosome it contacts the 23S rRNA (bridge B1a) and protein L5 of the 50S subunit (bridge B1b), connecting the 2 subunits; these bridges are implicated in subunit movement. Contacts the tRNAs in the A and P-sites. The polypeptide is Small ribosomal subunit protein uS13 (Aromatoleum aromaticum (strain DSM 19018 / LMG 30748 / EbN1) (Azoarcus sp. (strain EbN1))).